The primary structure comprises 94 residues: Small ribosomal subunit protein uS19 (94 aa).

Belongs to the universal ribosomal protein uS19 family.

Its function is as follows. Protein S19 forms a complex with S13 that binds strongly to the 16S ribosomal RNA. This Natranaerobius thermophilus (strain ATCC BAA-1301 / DSM 18059 / JW/NM-WN-LF) protein is Small ribosomal subunit protein uS19.